The chain runs to 459 residues: Vanillin aminotransferase (459 aa).

Residues 115–116 (GS) and D255 each bind pyridoxal 5'-phosphate. K284 is subject to N6-(pyridoxal phosphate)lysine. 320–321 (FT) is a binding site for pyridoxal 5'-phosphate. Positions 428 to 459 (LSLEELDELIRIYGKALKDTEKRVEELKSQKK) form a coiled coil.

The protein belongs to the class-III pyridoxal-phosphate-dependent aminotransferase family. As to expression, expressed in placental tissue of immature fruit.

The enzyme catalyses vanillin + L-alanine = vanillylamine + pyruvate. Functionally, involved in the biosynthesis of capsaicinoids natural products, pungent alkaloids synthesized from phenylpropanoid intermediates in the placental tissue of chili pepper fruit acting as repellant on herbivorous mammals and conferring spiciness to hot peppers. Can transfer an amine from alanine to vanillin, forming vanillylamine and pyruvate. This Capsicum frutescens (Cayenne pepper) protein is Vanillin aminotransferase.